Reading from the N-terminus, the 89-residue chain is Small ribosomal subunit protein uS15 (89 aa).

It belongs to the universal ribosomal protein uS15 family. As to quaternary structure, part of the 30S ribosomal subunit. Forms a bridge to the 50S subunit in the 70S ribosome, contacting the 23S rRNA.

Functionally, one of the primary rRNA binding proteins, it binds directly to 16S rRNA where it helps nucleate assembly of the platform of the 30S subunit by binding and bridging several RNA helices of the 16S rRNA. Forms an intersubunit bridge (bridge B4) with the 23S rRNA of the 50S subunit in the ribosome. This is Small ribosomal subunit protein uS15 from Acinetobacter baylyi (strain ATCC 33305 / BD413 / ADP1).